The primary structure comprises 303 residues: Imidazoleglycerol-phosphate dehydratase (303 aa).

This sequence belongs to the imidazoleglycerol-phosphate dehydratase family.

Its subcellular location is the cytoplasm. It catalyses the reaction D-erythro-1-(imidazol-4-yl)glycerol 3-phosphate = 3-(imidazol-4-yl)-2-oxopropyl phosphate + H2O. It functions in the pathway amino-acid biosynthesis; L-histidine biosynthesis; L-histidine from 5-phospho-alpha-D-ribose 1-diphosphate: step 6/9. The protein is Imidazoleglycerol-phosphate dehydratase of Neisseria gonorrhoeae (strain ATCC 700825 / FA 1090).